A 1136-amino-acid chain; its full sequence is Unconventional myosin-Ib (1136 aa).

The Myosin motor domain maps to 15–701; sequence IGVGDTVLLE…TLFQLEDLRK (687 aa). Ser60 bears the Phosphoserine mark. 108–115 contributes to the ATP binding site; the sequence is GESGAGKT. Lys287 participates in a covalent cross-link: Glycyl lysine isopeptide (Lys-Gly) (interchain with G-Cter in SUMO1); alternate. A Glycyl lysine isopeptide (Lys-Gly) (interchain with G-Cter in SUMO2); alternate cross-link involves residue Lys287. The tract at residues 592–599 is actin-binding; sequence YIRCIKPN. 6 IQ domains span residues 704–729, 730–750, 750–778, 780–807, 808–837, and 837–866; these read LEDL…LMKR, SQVV…YQQI, IKSS…HQKR, KEAA…DEAR, NKHA…EARR, and RKHA…ANAG. In terms of domain architecture, TH1 spans 952–1136; sequence KALYPSSVGQ…NNRLLEVAVP (185 aa).

Belongs to the TRAFAC class myosin-kinesin ATPase superfamily. Myosin family.

Its function is as follows. Motor protein that may participate in process critical to neuronal development and function such as cell migration, neurite outgrowth and vesicular transport. The protein is Unconventional myosin-Ib (Myo1b) of Rattus norvegicus (Rat).